We begin with the raw amino-acid sequence, 146 residues long: Single-stranded DNA-binding protein, mitochondrial (146 aa).

Residues 1–16 (MLRNASAQILKQFVRH) constitute a mitochondrion transit peptide. The SSB domain maps to 29–140 (INKVQILGRV…IIADNIVFLS (112 aa)).

The protein localises to the mitochondrion. It is found in the mitochondrion matrix. It localises to the mitochondrion nucleoid. Its function is as follows. Binds preferentially and cooperatively to pyrimidine rich single-stranded DNA (ss-DNA). May be required to maintain the copy number of mitochondrial DNA (mtDNA) and play a crucial role during mtDNA replication. Required for retinal ganglion cell differentiation and retinal integrity. The sequence is that of Single-stranded DNA-binding protein, mitochondrial from Danio rerio (Zebrafish).